Reading from the N-terminus, the 130-residue chain is Splicing regulatory small protein (130 aa).

Basic residues predominate over residues 1 to 10 (MRTKPQRPRA). Disordered stretches follow at residues 1 to 29 (MRTKPQRPRATRSYLGQPCGSPRRTEETG) and 74 to 130 (GRAL…STRR). The segment at 16-22 (GQPCGSP) is mediates interaction with SRSF3. Residues 77–98 (LEPKADPHTCPYGRKESRGEKV) show a composition bias toward basic and acidic residues. Polar residues predominate over residues 120–130 (SLKSGSPSTRR).

As to quaternary structure, interacts with SRSF3; increases SRSF3 binding to specific exons.

The protein localises to the nucleus. Interacts with the splicing factor SRSF3 and increases its binding to specific exons within pre-mRNA, thereby regulating exon-inclusion during alternative splicing. Does not directly bind pre-mRNA and could regulate a wider range of splicing factors through a similar mechanism. The protein is Splicing regulatory small protein of Homo sapiens (Human).